A 256-amino-acid polypeptide reads, in one-letter code: Ribonuclease 3-like protein 1 (256 aa).

Positions 22–168 constitute an RNase III domain; it reads AEVERALGGY…IVGAVYLDSK (147 aa). Mg(2+)-binding residues include Glu-65, Asp-154, and Glu-157.

The cofactor is Mg(2+). It depends on Mn(2+) as a cofactor.

Cleaves double-stranded RNA (dsRNA). The polypeptide is Ribonuclease 3-like protein 1 (Oryza sativa subsp. japonica (Rice)).